The chain runs to 980 residues: Envelope glycoprotein B (980 aa).

Polar residues predominate over residues 1-14; it reads MSSGCRSVGGSTWG. 2 disordered regions span residues 1 to 20 and 88 to 118; these read MSSGCRSVGGSTWGNWRGDG and TTPSPPTSTPTSMSTHSHGTVDPTLLPTETP. The N-terminal stretch at 1–86 is a signal peptide; that stretch reads MSSGCRSVGG…LFGSCVVRAV (86 aa). The Virion surface segment spans residues 87 to 849; it reads PTTPSPPTST…SGIASFLNNP (763 aa). The span at 96–118 shows a compositional bias: low complexity; it reads TPTSMSTHSHGTVDPTLLPTETP. 5 disulfides stabilise this stretch: Cys140/Cys647, Cys157/Cys603, Cys231/Cys296, Cys389/Cys437, and Cys668/Cys708. An N-linked (GlcNAc...) asparagine; by host glycan is attached at Asn165. Residues 197–203 are involved in fusion and/or binding to host membrane; that stretch reads VWKGYSH. N-linked (GlcNAc...) asparagine; by host glycosylation occurs at Asn275. The tract at residues 282 to 290 is involved in fusion and/or binding to host membrane; that stretch reads GWMPWRHYT. N-linked (GlcNAc...) asparagine; by host glycosylation is found at Asn380, Asn423, Asn497, Asn514, Asn515, and Asn560. Low complexity predominate over residues 505–516; the sequence is LLNPNANNNNNT. Residues 505-535 form a disordered region; the sequence is LLNPNANNNNNTTRRRRSLLSVPEPQPTQDG. Residues Asn727 and Asn749 are each glycosylated (N-linked (GlcNAc...) asparagine; by host). 2 hydrophobic membrane proximal region regions span residues 794-847 and 823-843; these read IDSV…SFLN and AVGTLVLGAAGAVVSTVSGIA. The helical transmembrane segment at 850–870 threads the bilayer; that stretch reads FGGLAIGLLVIAGLVAAFFAY. Topologically, residues 871-980 are intravirion; sequence RYVMQIRSNP…NDTMENEKMV (110 aa). A Golgi targeting motif is present at residues 925 to 928; it reads YMSM. The Internalization motif motif lies at 965–968; that stretch reads YTRL.

Belongs to the herpesviridae glycoprotein B family. As to quaternary structure, homotrimer; disulfide-linked. Binds to heparan sulfate proteoglycans. Interacts with gH/gL heterodimer. In terms of processing, a proteolytic cleavage by host furin generates two subunits that remain linked by disulfide bonds.

Its subcellular location is the virion membrane. The protein resides in the host cell membrane. It is found in the host endosome membrane. The protein localises to the host Golgi apparatus membrane. Its function is as follows. Envelope glycoprotein that forms spikes at the surface of virion envelope. Essential for the initial attachment to heparan sulfate moieties of the host cell surface proteoglycans. Involved in fusion of viral and cellular membranes leading to virus entry into the host cell. Following initial binding to its host receptors, membrane fusion is mediated by the fusion machinery composed at least of gB and the heterodimer gH/gL. May be involved in the fusion between the virion envelope and the outer nuclear membrane during virion egress. In Equus caballus (Horse), this protein is Envelope glycoprotein B.